Consider the following 927-residue polypeptide: Alpha-catenin-like protein hmp-1 (927 aa).

Coiled-coil stretches lie at residues 319 to 354 (TREN…RRDD) and 672 to 696 (QENQ…QIDI). Residues 901–927 (RNEIETGRDSDDEELDRRHQQRINGRL) form a disordered region.

This sequence belongs to the vinculin/alpha-catenin family. Component of a core catenin-cadherin complex consisting of hmr-1, hmp-1 and hmp-2; the complex localizes to adherens junctions. May interact with hmp-2. As to expression, epidermal cells.

The protein localises to the cell junction. Its subcellular location is the adherens junction. It is found in the cytoplasm. Required for cell migration during body enclosure and cell shape changes during body elongation. Required for proper localization of other junctional components, such as pac-1. This chain is Alpha-catenin-like protein hmp-1 (hmp-1), found in Caenorhabditis elegans.